The chain runs to 201 residues: Small ribosomal subunit protein uS10m (201 aa).

This sequence belongs to the universal ribosomal protein uS10 family. Component of the mitochondrial ribosome small subunit (28S) which comprises a 12S rRNA and about 30 distinct proteins.

The protein localises to the mitochondrion. The sequence is that of Small ribosomal subunit protein uS10m (MRPS10) from Pongo abelii (Sumatran orangutan).